A 338-amino-acid chain; its full sequence is Ferredoxin--NADP reductase (338 aa).

FAD-binding residues include Asp-35, Gln-43, Tyr-48, Ala-88, Phe-122, Asp-289, and Thr-330.

This sequence belongs to the ferredoxin--NADP reductase type 2 family. Homodimer. Requires FAD as cofactor.

The catalysed reaction is 2 reduced [2Fe-2S]-[ferredoxin] + NADP(+) + H(+) = 2 oxidized [2Fe-2S]-[ferredoxin] + NADPH. The protein is Ferredoxin--NADP reductase of Ehrlichia canis (strain Jake).